A 231-amino-acid polypeptide reads, in one-letter code: ATP synthase subunit a (231 aa).

Transmembrane regions (helical) follow at residues 14-34, 78-98, 107-127, 174-194, and 196-216; these read GFLKLNATIVFTWGLMLVLAV, YLGFLGTLFLFVATASLCTVI, SLSTTAALAFCVFVAVPFFGI, MIIGILLTITPFIFPIVMTAL, and LLTGMVQAYIFSILAAVYIAA.

It belongs to the ATPase A chain family. F-type ATPases have 2 components, CF(1) - the catalytic core - and CF(0) - the membrane proton channel. CF(1) has five subunits: alpha(3), beta(3), gamma(1), delta(1), epsilon(1). CF(0) has three main subunits: a(1), b(2) and c(9-12). The alpha and beta chains form an alternating ring which encloses part of the gamma chain. CF(1) is attached to CF(0) by a central stalk formed by the gamma and epsilon chains, while a peripheral stalk is formed by the delta and b chains.

It is found in the cell inner membrane. In terms of biological role, key component of the proton channel; it plays a direct role in the translocation of protons across the membrane. The chain is ATP synthase subunit a from Albidiferax ferrireducens (strain ATCC BAA-621 / DSM 15236 / T118) (Rhodoferax ferrireducens).